Here is a 197-residue protein sequence, read N- to C-terminus: Probable GTP-binding protein EngB (197 aa).

In terms of domain architecture, EngB-type G spans 22–197; that stretch reads TGVEVAFAGR…FKEKLDTWYQ (176 aa). GTP contacts are provided by residues 30–37, 57–61, 75–78, 142–145, and 177–179; these read GRSNAGKS, GRTQL, DLPG, TKAD, and FSS. Ser-37 and Thr-59 together coordinate Mg(2+).

Belongs to the TRAFAC class TrmE-Era-EngA-EngB-Septin-like GTPase superfamily. EngB GTPase family. Mg(2+) is required as a cofactor.

Its function is as follows. Necessary for normal cell division and for the maintenance of normal septation. The chain is Probable GTP-binding protein EngB from Francisella tularensis subsp. holarctica (strain FTNF002-00 / FTA).